A 426-amino-acid chain; its full sequence is Colanic acid biosynthesis protein WcaK (426 aa).

The protein belongs to the polysaccharide pyruvyl transferase family.

It functions in the pathway slime biogenesis; slime polysaccharide biosynthesis. The polypeptide is Colanic acid biosynthesis protein WcaK (wcaK) (Escherichia coli (strain K12)).